Here is a 334-residue protein sequence, read N- to C-terminus: Biotin synthase (334 aa).

The region spanning 55 to 285 (GSSGSIHACS…VHPRKIIKIA (231 aa)) is the Radical SAM core domain. [4Fe-4S] cluster is bound by residues C73, C77, and C80. C152, C213, and K283 together coordinate [2Fe-2S] cluster.

The protein belongs to the radical SAM superfamily. Biotin synthase family. As to quaternary structure, homodimer. Requires [4Fe-4S] cluster as cofactor. The cofactor is [2Fe-2S] cluster.

It catalyses the reaction (4R,5S)-dethiobiotin + (sulfur carrier)-SH + 2 reduced [2Fe-2S]-[ferredoxin] + 2 S-adenosyl-L-methionine = (sulfur carrier)-H + biotin + 2 5'-deoxyadenosine + 2 L-methionine + 2 oxidized [2Fe-2S]-[ferredoxin]. Its pathway is cofactor biosynthesis; biotin biosynthesis; biotin from 7,8-diaminononanoate: step 2/2. Functionally, catalyzes the conversion of dethiobiotin (DTB) to biotin by the insertion of a sulfur atom into dethiobiotin via a radical-based mechanism. The protein is Biotin synthase of Chlorobium phaeobacteroides (strain DSM 266 / SMG 266 / 2430).